A 261-amino-acid polypeptide reads, in one-letter code: Ribonuclease PH (261 aa).

Residues arginine 88 and 126 to 128 (GTR) contribute to the phosphate site. The tract at residues 242–261 (PYPGVLPEPKNPEPKKKFGA) is disordered. A compositionally biased stretch (basic and acidic residues) spans 251–261 (KNPEPKKKFGA).

This sequence belongs to the RNase PH family. As to quaternary structure, homohexameric ring arranged as a trimer of dimers.

The enzyme catalyses tRNA(n+1) + phosphate = tRNA(n) + a ribonucleoside 5'-diphosphate. Its function is as follows. Phosphorolytic 3'-5' exoribonuclease that plays an important role in tRNA 3'-end maturation. Removes nucleotide residues following the 3'-CCA terminus of tRNAs; can also add nucleotides to the ends of RNA molecules by using nucleoside diphosphates as substrates, but this may not be physiologically important. Probably plays a role in initiation of 16S rRNA degradation (leading to ribosome degradation) during starvation. This Rhodococcus erythropolis (strain PR4 / NBRC 100887) protein is Ribonuclease PH.